The primary structure comprises 1977 residues: Echinoderm microtubule-associated protein-like 5 (1977 aa).

10 WD repeats span residues 59–100 (GHSD…TVSV), 104–145 (VHTH…MLSM), 148–187 (GHTDRIFDISWDLYQPNKLVSCGVKHIKFWSLCGNALTPK), 195–233 (GDLQTILCLACARDELTYSGALNGDIYVWKGINLIRTIQ), 235–273 (AHTAGIFSMNSCEEGFATGGRDGCIRLWDLTFKPITVID), 280–321 (GYKG…LIMQ), 323–362 (HCEGELWALAVHPTKPLAVTGSDDRSVRIWSLVDHALIAR), 406–445 (DRKEAIHELKYSPDGAYLAVGCNDSSVDIYGVAQRYKKVG), 449–488 (GSLSFITHLDWSSDSRYLQTNDGSGKRLLYKMPGGKEVTS), and 561–601 (GHSA…KLKD). Positions 609-629 (ESLAESNSDESDSDLSDVPEL) are disordered. The segment covering 615-629 (NSDESDSDLSDVPEL) has biased composition (acidic residues). WD repeat units follow at residues 725–766 (GHDD…PLSI), 770–811 (YHQY…KLSV), 814–853 (GSKDKIFVVKMNPYVPDKLITAGIKHMKFWRRAGGGLIGK), 861–900 (GKNDTMMCAVYGWTEEMAFSGTSTGDVCIWRDVFLVKTVK), 901–940 (AHDGPVFSMHALEKGFVTGGKDGMVALWDDSFERCLKTYA), 996–1035 (HMEGEVWGLATHPYLPICATVSDDKTLRIWDLSPSHCMLA), 1038–1077 (KLKKGGRCCCFSPDGKALAVGLNDGSFLMANADTLEDLVS), 1080–1120 (HRKD…RVGV), and 1236–1276 (AHST…HREK). Disordered stretches follow at residues 1276 to 1297 (KKYCDSEESDIDSEEDGGYDSD) and 1323 to 1363 (PHLQ…NVGK). Residues 1281–1294 (SEESDIDSEEDGGY) show a composition bias toward acidic residues. A compositionally biased stretch (basic and acidic residues) spans 1326-1337 (QQKEPSVDERQG). WD repeat units follow at residues 1420 to 1471 (EHND…TLSI), 1475 to 1516 (SHSK…KIAS), 1519 to 1558 (GHNQRIFVAEFRPDSDTQFVSVGIKHVKFWTLAGRALLSK), 1568 to 1606 (ARMQTMLAVAFGANNLTFTGTISGDVCVWKDHILCRVVA), 1608 to 1654 (AHNG…RAFR), 1699 to 1739 (GHVD…MLNK), 1741 to 1782 (NLGH…GKKR), 1783 to 1822 (DRRCAIHDIRFSPDSRYLAVGSSENSVDFYDLTLGPTLNR), 1895 to 1934 (AEKADVTCACVSHSGISLVTGDDFGMVKLYDFPCPEKFAK), and 1940 to 1977 (GHSPHVTNIRFTSGDRHVVSAGGDDCSLFVWKCVHMPH).

It belongs to the WD repeat EMAP family.

It localises to the cytoplasm. The protein localises to the cytoskeleton. In terms of biological role, may modify the assembly dynamics of microtubules, such that microtubules are slightly longer, but more dynamic. In Mus musculus (Mouse), this protein is Echinoderm microtubule-associated protein-like 5 (Eml5).